The primary structure comprises 376 residues: Phospho-N-acetylmuramoyl-pentapeptide-transferase (376 aa).

10 helical membrane-spanning segments follow: residues 28–48 (RTIM…PWFI), 76–96 (TMGG…WADL), 100–120 (FVLA…LDDF), 135–155 (YKLI…FLLA), 179–199 (YPIE…VVAT), 211–231 (GLAI…AYIV), 252–272 (AGEL…FLWY), 279–299 (VFMG…LAVF), 307–327 (IILG…VLSF), and 353–373 (KIIV…LASM).

Belongs to the glycosyltransferase 4 family. MraY subfamily. The cofactor is Mg(2+).

It is found in the cell inner membrane. It catalyses the reaction UDP-N-acetyl-alpha-D-muramoyl-L-alanyl-gamma-D-glutamyl-meso-2,6-diaminopimeloyl-D-alanyl-D-alanine + di-trans,octa-cis-undecaprenyl phosphate = di-trans,octa-cis-undecaprenyl diphospho-N-acetyl-alpha-D-muramoyl-L-alanyl-D-glutamyl-meso-2,6-diaminopimeloyl-D-alanyl-D-alanine + UMP. Its pathway is cell wall biogenesis; peptidoglycan biosynthesis. Catalyzes the initial step of the lipid cycle reactions in the biosynthesis of the cell wall peptidoglycan: transfers peptidoglycan precursor phospho-MurNAc-pentapeptide from UDP-MurNAc-pentapeptide onto the lipid carrier undecaprenyl phosphate, yielding undecaprenyl-pyrophosphoryl-MurNAc-pentapeptide, known as lipid I. In Sorangium cellulosum (strain So ce56) (Polyangium cellulosum (strain So ce56)), this protein is Phospho-N-acetylmuramoyl-pentapeptide-transferase.